Here is a 158-residue protein sequence, read N- to C-terminus: MGRFIFVSFGLLVVFLSLSGAKGNNCPQDWLPMNGLCYKIFDELKAWKDAEMFCRKYKPGCHLASFHLYGESPEIAEYISDYHKGQSEVWIGLWDKKKDFSWEWTDRSCTDYLSWDKNQPDHYQNKEFCVELVSDTGYRLWNDQVCESKNAFLCQCKF.

Residues 1–23 (MGRFIFVSFGLLVVFLSLSGAKG) form the signal peptide. Disulfide bonds link Cys26-Cys37, Cys54-Cys154, Cys61-Cys156, and Cys129-Cys146. In terms of domain architecture, C-type lectin spans 33–155 (MNGLCYKIFD…CESKNAFLCQ (123 aa)). Positions 119, 121, 127, 142, and 143 each coordinate Ca(2+). The Galactose-binding signature appears at 119-121 (QPD).

Homodimer; disulfide-linked. As to expression, expressed by the venom gland.

It is found in the secreted. In terms of biological role, lectin with a hemagglutinating activity that is inhibited by galactose, lactose and EDTA. Is calcium-dependent. Shows effects on the renal function of isolated perfused rat kidneys by increasing both perfusion pressure (PP) and renal vascular resistance (RVR). In addition, the urinary flow and glomerular filtration rate (GFR) decreases significantly. The changes observed may reflect direct injury to the glomerular and tubular renal cells, and the rise in permeability in the glomerular endothelial cells, may be the effect of interactions of C-type lectin with endothelial cells or due to release of other mediators by mesangial, tubular and endothelial cells. In Bothrops insularis (Golden lancehead), this protein is C-type lectin BiL.